A 56-amino-acid polypeptide reads, in one-letter code: Preprotein translocase subunit SecG (56 aa).

The Cytoplasmic portion of the chain corresponds to Met-1 to Ser-29. A helical membrane pass occupies residues Pro-30–Met-49. Residues Phe-50–Gly-56 are Extracellular-facing.

This sequence belongs to the SEC61-beta family. Component of the protein translocase complex. Heterotrimer consisting of alpha (SecY), beta (SecG) and gamma (SecE) subunits. Can form oligomers of the heterotrimer.

It is found in the cell membrane. In terms of biological role, involved in protein export. The function of the beta subunit is unknown, but it may be involved in stabilization of the trimeric complex. The polypeptide is Preprotein translocase subunit SecG (Thermococcus kodakarensis (strain ATCC BAA-918 / JCM 12380 / KOD1) (Pyrococcus kodakaraensis (strain KOD1))).